The following is a 483-amino-acid chain: Probable pectate lyase 12 (483 aa).

A signal peptide spans 1–24 (MMLQRSCIVLFFSLFLLVPQMVFS). N-linked (GlcNAc...) asparagine glycosylation is found at N27 and N50. Positions 220, 244, and 248 each coordinate Ca(2+). The active site involves R300.

Belongs to the polysaccharide lyase 1 family. Requires Ca(2+) as cofactor.

It catalyses the reaction Eliminative cleavage of (1-&gt;4)-alpha-D-galacturonan to give oligosaccharides with 4-deoxy-alpha-D-galact-4-enuronosyl groups at their non-reducing ends.. Its pathway is glycan metabolism; pectin degradation; 2-dehydro-3-deoxy-D-gluconate from pectin: step 2/5. The chain is Probable pectate lyase 12 from Arabidopsis thaliana (Mouse-ear cress).